The chain runs to 182 residues: Peptidoglycan L,D-endopeptidase MepK (182 aa).

Residues 1 to 30 (MDKFDANRRKLLALGGVALGAAILPTPAFA) constitute a signal peptide (tat-type signal). Positions 133, 140, and 173 each coordinate Zn(2+).

Belongs to the peptidase M15 family. It depends on Zn(2+) as a cofactor. Post-translationally, predicted to be exported by the Tat system. The position of the signal peptide cleavage has not been experimentally proven.

It functions in the pathway cell wall biogenesis; cell wall polysaccharide biosynthesis. Its function is as follows. L,D-endopeptidase that cleaves meso-diaminopimelic acid (mDAP)-mDAP cross-links in peptidoglycan. It works in conjunction with other elongation-specific D,D-endopeptidases to make space for efficient incorporation of nascent peptidoglycan strands into the sacculus and thus enable cell wall expansion. This Escherichia coli O157:H7 protein is Peptidoglycan L,D-endopeptidase MepK.